The primary structure comprises 357 residues: UDP-N-acetylglucosamine--N-acetylmuramyl-(pentapeptide) pyrophosphoryl-undecaprenol N-acetylglucosamine transferase (357 aa).

UDP-N-acetyl-alpha-D-glucosamine is bound by residues 12 to 14 (TGG), N124, R162, S190, I244, 263 to 268 (ALTVAE), and Q289.

The protein belongs to the glycosyltransferase 28 family. MurG subfamily.

It is found in the cell inner membrane. The enzyme catalyses di-trans,octa-cis-undecaprenyl diphospho-N-acetyl-alpha-D-muramoyl-L-alanyl-D-glutamyl-meso-2,6-diaminopimeloyl-D-alanyl-D-alanine + UDP-N-acetyl-alpha-D-glucosamine = di-trans,octa-cis-undecaprenyl diphospho-[N-acetyl-alpha-D-glucosaminyl-(1-&gt;4)]-N-acetyl-alpha-D-muramoyl-L-alanyl-D-glutamyl-meso-2,6-diaminopimeloyl-D-alanyl-D-alanine + UDP + H(+). Its pathway is cell wall biogenesis; peptidoglycan biosynthesis. Functionally, cell wall formation. Catalyzes the transfer of a GlcNAc subunit on undecaprenyl-pyrophosphoryl-MurNAc-pentapeptide (lipid intermediate I) to form undecaprenyl-pyrophosphoryl-MurNAc-(pentapeptide)GlcNAc (lipid intermediate II). This is UDP-N-acetylglucosamine--N-acetylmuramyl-(pentapeptide) pyrophosphoryl-undecaprenol N-acetylglucosamine transferase from Alkalilimnicola ehrlichii (strain ATCC BAA-1101 / DSM 17681 / MLHE-1).